The primary structure comprises 115 residues: NADH-ubiquinone oxidoreductase chain 3 (115 aa).

Transmembrane regions (helical) follow at residues 3 to 23 (LFIMLTMSSITVSIVVALNLL), 55 to 75 (FFMVGILFLLFDLEIAILLPL), and 87 to 107 (TITWAIIIFLFLFIGLAYEWL).

This sequence belongs to the complex I subunit 3 family.

The protein localises to the mitochondrion membrane. It carries out the reaction a ubiquinone + NADH + 5 H(+)(in) = a ubiquinol + NAD(+) + 4 H(+)(out). Functionally, core subunit of the mitochondrial membrane respiratory chain NADH dehydrogenase (Complex I) that is believed to belong to the minimal assembly required for catalysis. Complex I functions in the transfer of electrons from NADH to the respiratory chain. The immediate electron acceptor for the enzyme is believed to be ubiquinone. The sequence is that of NADH-ubiquinone oxidoreductase chain 3 (MT-ND3) from Alligator mississippiensis (American alligator).